Here is a 452-residue protein sequence, read N- to C-terminus: C4-dicarboxylate transport protein 1 (452 aa).

The next 9 helical transmembrane spans lie at 18–38 (FQVV…PSVG), 51–71 (LIKM…IAGM), 83–103 (LALL…LLLV), 151–171 (AFAK…GFAL), 191–211 (VLFT…FGAM), 229–249 (LMGA…GAIA), 304–324 (GYSF…VFIA), 337–357 (ITLL…TGSG), and 359–379 (IVLA…LALI). The interval 426-452 (WEEAQEPERVLDKKTEHMPVSAMSDAG) is disordered. Residues 431-442 (EPERVLDKKTEH) show a composition bias toward basic and acidic residues.

This sequence belongs to the dicarboxylate/amino acid:cation symporter (DAACS) (TC 2.A.23) family.

The protein resides in the cell inner membrane. Its function is as follows. Responsible for the transport of dicarboxylates such as succinate, fumarate, and malate from the periplasm across the membrane. The polypeptide is C4-dicarboxylate transport protein 1 (Polaromonas naphthalenivorans (strain CJ2)).